A 223-amino-acid chain; its full sequence is uncharacterized protein (223 aa).

To M.jannaschii MJ0575.

This is an uncharacterized protein from Methanocaldococcus jannaschii (strain ATCC 43067 / DSM 2661 / JAL-1 / JCM 10045 / NBRC 100440) (Methanococcus jannaschii).